Here is a 323-residue protein sequence, read N- to C-terminus: Pseudouridylate synthase TRUB2, mitochondrial (323 aa).

Residue Asp-98 is the Nucleophile of the active site. The disordered stretch occupies residues 302–323 (SGHQQQLPSAGQPWASRVQAPL).

This sequence belongs to the pseudouridine synthase TruB family. As to quaternary structure, forms a regulatory protein-RNA complex, consisting of RCC1L, NGRN, RPUSD3, RPUSD4, TRUB2, FASTKD2 and 16S mt-rRNA.

The protein resides in the mitochondrion matrix. The enzyme catalyses a uridine in mRNA = a pseudouridine in mRNA. It carries out the reaction uridine(55) in tRNA = pseudouridine(55) in tRNA. Minor enzyme contributing to the isomerization of uridine to pseudouridine (pseudouridylation) of specific mitochondrial mRNAs (mt-mRNAs) such as COXI and COXIII mt-mRNAs. As a component of a functional protein-RNA module, consisting of RCC1L, NGRN, RPUSD3, RPUSD4, TRUB2, FASTKD2 and 16S mitochondrial ribosomal RNA (16S mt-rRNA), controls 16S mt-rRNA abundance and is required for intra-mitochondrial translation. Also catalyzes pseudouridylation of some tRNAs, including synthesis of pseudouridine(55) from uracil-55, in the psi GC loop of a subset of tRNAs. The polypeptide is Pseudouridylate synthase TRUB2, mitochondrial (Rattus norvegicus (Rat)).